Here is a 1720-residue protein sequence, read N- to C-terminus: Merozoite surface protein 1 (1720 aa).

The N-terminal stretch at 1 to 19 (MKIIFFLCSFLFFIINTQC) is a signal peptide. Residues 63–112 (ASAQSGASAQSGASAQSGASAQSGASAQSGASAQSGTSGPSGPSGTSPSS) show a composition bias toward low complexity. Residues 63–137 (ASAQSGASAQ…PPADASDSDA (75 aa)) are disordered. A compositionally biased stretch (polar residues) spans 113 to 122 (RSNTLPRSNT). Residues 123-132 (SSGASPPADA) are compositionally biased toward low complexity. Residues 474–519 (INNIKKKIDLEEKNINHTKEQNKKLLEDYEKSKKDYEELLEKFYEM) are a coiled coil. Disordered regions lie at residues 723–775 (SETT…PPKE), 908–955 (TGTS…SGPA), 1249–1278 (TPPQPDVTPSPLSVRVSGSSGSTKEETQIP), and 1470–1491 (KEKFPSSPPTTPPSPAKTDEQK). Acidic residues predominate over residues 743–753 (EVTEETEETEE). The segment covering 908 to 946 (TGTSSTSSPGNTTVNTAQSATHSNSQNQQSNASSTNTQN) has biased composition (low complexity). A compositionally biased stretch (polar residues) spans 1264-1278 (VSGSSGSTKEETQIP). Positions 1475-1484 (SSPPTTPPSP) are enriched in pro residues. EGF-like domains follow at residues 1611-1651 (HQCV…VENP) and 1652-1693 (NPTC…YPLF). Disulfide bonds link Cys-1613–Cys-1624, Cys-1618–Cys-1634, Cys-1636–Cys-1647, Cys-1655–Cys-1668, Cys-1662–Cys-1682, and Cys-1684–Cys-1698. Ser-1699 carries GPI-anchor amidated serine lipidation. Positions 1700-1720 (SSNFLGISFLLILMLILYSFI) are cleaved as a propeptide — removed in mature form.

Forms a complex composed of subunits p83, p30, p38, and p42 which remain non-covalently associated; the complex is formed at the merozoite surface prior to egress from host erythrocytes. Forms a complex composed of processed MSP1 subunits, MSP6 subunit p36 and MSP7; the complex is formed at the merozoite surface prior to egress from host erythrocytes. Within the complex, interacts (via subunit p38) with MSP6 subunit p36 and (via subunits p83, p30 and p38) with MSP7 (via subunit p22). Forms a complex composed of MSP1, MSP6, DBLMSP1 and DBLMSP2. Within the complex, interacts (via subunit p38) with DBLMSP1 and DBLMSP2. Forms a complex composed of MSP1, and rhoptry proteins RhopH3, RAP1 and CLAG9/RhopH3. Within the complex, interacts (via subunits p42 and p19) with RhopH3 (via C-terminus). Forms a complex composed of MSP1, MSP6, MSP7, MSP9 and MSP3; within the complex, MSP6 and MSP9 mediate the binding to the host erythrocyte. Interacts (via subunits p19 and p42) with MSP9; the interaction is direct; MSP1 subunits p19 or p42, and MSP9 form a co-ligand complex that interacts with host SLC4A1/Band 3 protein. May interact with PFD6. Interacts with host spectrin. As to quaternary structure, interacts with host glycophorin GYPA in a sialic acid-independent manner. In terms of assembly, interacts with host proinflammatory cytokine S100P; the interaction blocks S100P inflammatory and chemotactic activities. Interacts with host SLC4A1/Band 3 (via 5ABC region) on the host erythrocyte surface in a sialic acid-independent manner. Post-translationally, the p190 precursor is cleaved by SUB1 prior to merozoite egress into 4 subunits p83, p30, p38, and p42 which remain non-covalently associated. SUB1-mediated proteolytic cleavage occurs in an orderly manner; the first cleavage occurs at the p30/p38 site, followed by cleavage at the p83/p30 site, in the 3D7 strain a second cleavage occurs at the N-terminus of p83, the last cleavage occurs at the p38/p42 site. The order of cleavage is essential for parasite viability. SUB1-mediated processing is essential for merozoite egress. In a second processing step during erythrocyte invasion, p42 is cleaved by SUB2 into p33 and p19; the latter remains attached to the merozoite surface via its GPI-anchor and is endocytosed during the subsequent ring stage.

It localises to the cell membrane. The protein localises to the secreted. Its subcellular location is the vacuole membrane. In terms of biological role, during the asexual blood stage, involved in merozoite egress from host erythrocytes possibly via its interaction with the host cytoskeleton protein spectrin resulting in the destabilization of the host cytoskeleton and thus leading to erythrocyte cell membrane rupture. Involved in the binding to host erythrocytes and is required for host erythrocyte invasion. Functionally, by binding to host proinflammatory cytokine S100P may interfere with host immune responses. Its function is as follows. Involved in merozoite invasion of host erythrocytes. May play a role in the biogenesis and/or function of the food vacuole during the intraerythrocytic development. The protein is Merozoite surface protein 1 of Plasmodium falciparum (isolate 3D7).